A 325-amino-acid chain; its full sequence is Pyruvate dehydrogenase E1 component subunit beta (325 aa).

A thiamine diphosphate-binding site is contributed by Glu-60.

Heterodimer of an alpha and a beta chain. It depends on thiamine diphosphate as a cofactor.

It catalyses the reaction N(6)-[(R)-lipoyl]-L-lysyl-[protein] + pyruvate + H(+) = N(6)-[(R)-S(8)-acetyldihydrolipoyl]-L-lysyl-[protein] + CO2. Functionally, the pyruvate dehydrogenase complex catalyzes the overall conversion of pyruvate to acetyl-CoA and CO(2). It contains multiple copies of three enzymatic components: pyruvate dehydrogenase (E1), dihydrolipoamide acetyltransferase (E2) and lipoamide dehydrogenase (E3). The sequence is that of Pyruvate dehydrogenase E1 component subunit beta (pdhB) from Staphylococcus epidermidis (strain ATCC 35984 / DSM 28319 / BCRC 17069 / CCUG 31568 / BM 3577 / RP62A).